The chain runs to 896 residues: DNA mismatch repair protein MutS (896 aa).

599–606 is an ATP binding site; that stretch reads GPNMAGKS.

This sequence belongs to the DNA mismatch repair MutS family.

Its function is as follows. This protein is involved in the repair of mismatches in DNA. It is possible that it carries out the mismatch recognition step. This protein has a weak ATPase activity. The sequence is that of DNA mismatch repair protein MutS from Geobacillus kaustophilus (strain HTA426).